The sequence spans 93 residues: UPF0728 protein C10orf53 homolog (93 aa).

Belongs to the UPF0728 family.

This is UPF0728 protein C10orf53 homolog from Bos taurus (Bovine).